The chain runs to 90 residues: uncharacterized protein (90 aa).

An N-terminal signal peptide occupies residues 1-20 (MEKLFVLVFALALLAFSSDA).

Its subcellular location is the secreted. This is an uncharacterized protein from Mus musculus (Mouse).